Reading from the N-terminus, the 307-residue chain is Bifunctional protein FolD (307 aa).

NADP(+)-binding positions include 170–172 (GRS), S195, and I236.

This sequence belongs to the tetrahydrofolate dehydrogenase/cyclohydrolase family. Homodimer.

The catalysed reaction is (6R)-5,10-methylene-5,6,7,8-tetrahydrofolate + NADP(+) = (6R)-5,10-methenyltetrahydrofolate + NADPH. It catalyses the reaction (6R)-5,10-methenyltetrahydrofolate + H2O = (6R)-10-formyltetrahydrofolate + H(+). It participates in one-carbon metabolism; tetrahydrofolate interconversion. In terms of biological role, catalyzes the oxidation of 5,10-methylenetetrahydrofolate to 5,10-methenyltetrahydrofolate and then the hydrolysis of 5,10-methenyltetrahydrofolate to 10-formyltetrahydrofolate. This is Bifunctional protein FolD from Sinorhizobium fredii (strain NBRC 101917 / NGR234).